Consider the following 421-residue polypeptide: ATP-dependent RNA helicase RhlB (421 aa).

The Q motif motif lies at 9-37 (QKFSDFALHPKVVEALEKKGFHNCTPIQA). In terms of domain architecture, Helicase ATP-binding spans 40–219 (LPLTLAGRDV…FEQMNNAEYI (180 aa)). 53-60 (AQTGTGKT) serves as a coordination point for ATP. The DEAD box signature appears at 165–168 (DEAD). The 146-residue stretch at 245 to 390 (RLLQTLIEEE…VSKYNPDALM (146 aa)) folds into the Helicase C-terminal domain. Residues 392–421 (DLPKPLRLTRPRTGNGPRRTGAPRNRRRSG) form a disordered region. Over residues 402-414 (PRTGNGPRRTGAP) the composition is skewed to low complexity.

Belongs to the DEAD box helicase family. RhlB subfamily. In terms of assembly, component of the RNA degradosome, which is a multiprotein complex involved in RNA processing and mRNA degradation.

It localises to the cytoplasm. It carries out the reaction ATP + H2O = ADP + phosphate + H(+). Functionally, DEAD-box RNA helicase involved in RNA degradation. Has RNA-dependent ATPase activity and unwinds double-stranded RNA. The protein is ATP-dependent RNA helicase RhlB of Escherichia coli O157:H7 (strain EC4115 / EHEC).